A 153-amino-acid polypeptide reads, in one-letter code: Cytochrome c-type biogenesis protein CcmE (153 aa).

At 1–8 the chain is on the cytoplasmic side; sequence MMTPRQRR. Residues 9 to 29 traverse the membrane as a helical; Signal-anchor for type II membrane protein segment; sequence MTWVALMVAGVSLAAFFALTA. Over 30 to 153 the chain is Periplasmic; the sequence is FQKNLLYFYT…PADYSEYRKK (124 aa). Positions 124 and 128 each coordinate heme. Residues 134–153 are disordered; the sequence is AESLKKNGGLPADYSEYRKK.

It belongs to the CcmE/CycJ family.

Its subcellular location is the cell inner membrane. Functionally, heme chaperone required for the biogenesis of c-type cytochromes. Transiently binds heme delivered by CcmC and transfers the heme to apo-cytochromes in a process facilitated by CcmF and CcmH. This chain is Cytochrome c-type biogenesis protein CcmE, found in Methylococcus capsulatus (strain ATCC 33009 / NCIMB 11132 / Bath).